A 349-amino-acid polypeptide reads, in one-letter code: Cyclic AMP-dependent transcription factor ATF-4 (349 aa).

Disordered regions lie at residues 49 to 75 (FSSD…TGKE), 204 to 271 (PPCV…TAKV), and 279 to 298 (KLKK…QKKR). Residue Pro-60 is modified to 4-hydroxyproline. A Phosphothreonine modification is found at Thr-212. Residues Ser-214, Ser-218, Ser-223, Ser-230, and Ser-234 each carry the phosphoserine modification. The BetaTrCP degron motif signature appears at 214 to 223 (SDNDSGICMS). Positions 229–239 (GSPQHSPSTSR) are enriched in polar residues. Pro-235 is modified (4-hydroxyproline). The residue at position 247 (Ser-247) is a Phosphoserine. The residue at position 251 (Ser-251) is a Phosphoserine; by RPS6KA3. Glycyl lysine isopeptide (Lys-Gly) (interchain with G-Cter in SUMO2) cross-links involve residues Lys-258 and Lys-270. One can recognise a bZIP domain in the interval 276 to 339 (LDKKLKKMEQ…QYLKDLIEEV (64 aa)). The tract at residues 278 to 298 (KKLKKMEQNKTAATRYRQKKR) is basic motif. The interval 303 to 339 (ALTGECKELEKKNEALKEKADSLAKEIQYLKDLIEEV) is interaction with GABBR1. The segment at 304 to 332 (LTGECKELEKKNEALKEKADSLAKEIQYL) is leucine-zipper. Position 309 is an N6-acetyllysine (Lys-309).

It belongs to the bZIP family. Binds DNA as a homodimer and as a heterodimer. Heterodimer; heterodimerizes with CEBPB. Heterodimer; heterodimerizes with DDIT3/CHOP. Interacts with CEP290 (via an N-terminal region). Interacts with NEK6, DAPK2 (isoform 2) and ZIPK/DAPK3. Interacts (via its leucine zipper domain) with GABBR1 and GABBR2 (via their C-termini). Forms a heterodimer with TXLNG in osteoblasts. Interacts (via its DNA binding domain) with FOXO1 (C-terminal half); the interaction occurs in osteoblasts and regulates glucose homeostasis through suppression of beta-cell proliferation and a decrease in insulin production. Interacts with SATB2; the interaction results in enhanced DNA binding and transactivation by these transcription factors. Interacts with ABRAXAS2. Interacts with TRIB3, inhibiting the transactivation activity of ATF4. Interacts with DISC1; which inhibits ATF4 transcription factor activity by disrupting ATF4 dimerization and DNA-binding. Interacts with EP300/p300; EP300/p300 stabilizes ATF4 and increases its transcriptional activity independently of its catalytic activity by preventing its ubiquitination. Ubiquitinated by SCF(BTRC) in response to mTORC1 signal, followed by proteasomal degradation and leading to down-regulate expression of SIRT4. Interaction with EP300/p300 inhibits ubiquitination by SCF(BTRC). In terms of processing, phosphorylation at Ser-251 by RPS6KA3/RSK2 in osteoblasts enhances transactivation activity and promotes osteoblast differentiation. Phosphorylated on the betaTrCP degron motif at Ser-218, followed by phosphorylation at Thr-212, Ser-223, Ser-230, Ser-234 and Ser-247, promoting interaction with BTRC and ubiquitination. Phosphorylation is promoted by mTORC1. Phosphorylation at Ser-214 by CK2 decreases its stability. Phosphorylated by NEK6. Post-translationally, hydroxylated by PHD3, leading to decreased protein stability. Ubiquitously expressed in adults.

It is found in the nucleus. Its subcellular location is the nucleus speckle. The protein localises to the cytoplasm. The protein resides in the cell membrane. It localises to the cytoskeleton. It is found in the microtubule organizing center. Its subcellular location is the centrosome. Functionally, transcription factor that binds the cAMP response element (CRE) (consensus: 5'-GTGACGT[AC][AG]-3') and displays two biological functions, as regulator of metabolic and redox processes under normal cellular conditions, and as master transcription factor during integrated stress response (ISR). Binds to asymmetric CRE's as a heterodimer and to palindromic CRE's as a homodimer. Core effector of the ISR, which is required for adaptation to various stress such as endoplasmic reticulum (ER) stress, amino acid starvation, mitochondrial stress or oxidative stress. During ISR, ATF4 translation is induced via an alternative ribosome translation re-initiation mechanism in response to EIF2S1/eIF-2-alpha phosphorylation, and stress-induced ATF4 acts as a master transcription factor of stress-responsive genes in order to promote cell recovery. Promotes the transcription of genes linked to amino acid sufficiency and resistance to oxidative stress to protect cells against metabolic consequences of ER oxidation. Activates the transcription of NLRP1, possibly in concert with other factors in response to ER stress. Activates the transcription of asparagine synthetase (ASNS) in response to amino acid deprivation or ER stress. However, when associated with DDIT3/CHOP, the transcriptional activation of the ASNS gene is inhibited in response to amino acid deprivation. Together with DDIT3/CHOP, mediates programmed cell death by promoting the expression of genes involved in cellular amino acid metabolic processes, mRNA translation and the terminal unfolded protein response (terminal UPR), a cellular response that elicits programmed cell death when ER stress is prolonged and unresolved. Activates the expression of COX7A2L/SCAF1 downstream of the EIF2AK3/PERK-mediated unfolded protein response, thereby promoting formation of respiratory chain supercomplexes and increasing mitochondrial oxidative phosphorylation. Together with DDIT3/CHOP, activates the transcription of the IRS-regulator TRIB3 and promotes ER stress-induced neuronal cell death by regulating the expression of BBC3/PUMA in response to ER stress. May cooperate with the UPR transcriptional regulator QRICH1 to regulate ER protein homeostasis which is critical for cell viability in response to ER stress. In the absence of stress, ATF4 translation is at low levels and it is required for normal metabolic processes such as embryonic lens formation, fetal liver hematopoiesis, bone development and synaptic plasticity. Acts as a regulator of osteoblast differentiation in response to phosphorylation by RPS6KA3/RSK2: phosphorylation in osteoblasts enhances transactivation activity and promotes expression of osteoblast-specific genes and post-transcriptionally regulates the synthesis of Type I collagen, the main constituent of the bone matrix. Cooperates with FOXO1 in osteoblasts to regulate glucose homeostasis through suppression of beta-cell production and decrease in insulin production. Activates transcription of SIRT4. Regulates the circadian expression of the core clock component PER2 and the serotonin transporter SLC6A4. Binds in a circadian time-dependent manner to the cAMP response elements (CRE) in the SLC6A4 and PER2 promoters and periodically activates the transcription of these genes. Mainly acts as a transcriptional activator in cellular stress adaptation, but it can also act as a transcriptional repressor: acts as a regulator of synaptic plasticity by repressing transcription, thereby inhibiting induction and maintenance of long-term memory. Regulates synaptic functions via interaction with DISC1 in neurons, which inhibits ATF4 transcription factor activity by disrupting ATF4 dimerization and DNA-binding. The sequence is that of Cyclic AMP-dependent transcription factor ATF-4 from Mus musculus (Mouse).